Reading from the N-terminus, the 243-residue chain is Peptidase E (243 aa).

Residues serine 118, aspartate 133, and histidine 155 each act as charge relay system in the active site.

This sequence belongs to the peptidase S51 family.

Its subcellular location is the cytoplasm. It catalyses the reaction Dipeptidase E catalyzes the hydrolysis of dipeptides Asp-|-Xaa. It does not act on peptides with N-terminal Glu, Asn or Gln, nor does it cleave isoaspartyl peptides.. Hydrolyzes dipeptides containing N-terminal aspartate residues. May play a role in allowing the cell to use peptide aspartate to spare carbon otherwise required for the synthesis of the aspartate family of amino acids. In Streptomyces coelicolor (strain ATCC BAA-471 / A3(2) / M145), this protein is Peptidase E.